The sequence spans 1136 residues: Solute carrier family 12 member 2 (1136 aa).

2 disordered regions span residues 1–73 and 91–121; these read MSAS…SVSG and PDAAPAETAQNGDTVMSEGSLHSSTGGQQHH. Residues 1-208 are Cytoplasmic-facing; sequence MSASPPISAG…SESKGVVKFG (208 aa). Phosphothreonine is present on residues Thr-125, Thr-129, Thr-134, Thr-139, and Thr-152. Residues 209–234 traverse the membrane as a discontinuously helical segment; it reads WIKGVLVRCMLNIWGVMLFIRMTWIV. Leu-219 lines the Na(+) pocket. K(+) is bound by residues Asn-220 and Ile-221. A Na(+)-binding site is contributed by Trp-222. Chloride contacts are provided by Gly-223, Val-224, and Met-225. Topologically, residues 235–238 are extracellular; it reads GQAG. The chain crosses the membrane as a helical span at residues 239–261; the sequence is IAYSCIIVIMATVVTTITGCSTS. Topologically, residues 262 to 285 are cytoplasmic; the sequence is AIATNGFVRGGGAYYLISRSLGPE. The helical transmembrane segment at 286-314 threads the bilayer; it reads FGGSIGLIFAFANAVAVAMYVVGFAETVV. Phe-294 is a binding site for chloride. Tyr-305 lines the K(+) pocket. The Extracellular segment spans residues 315–327; the sequence is ELLMDSGLLMIDQ. 2 helical membrane passes run 328–351 and 352–376; these read TNDIRVIGTITVILLLGISVAGME and WEAKAQIFLLVILITAIFNYFIGSF. The Extracellular portion of the chain corresponds to 377-407; that stretch reads IAVDSKKKFGFFSYDAGILAENFGPDFRGQT. The chain crosses the membrane as a discontinuously helical span at residues 408–427; sequence FFSVFSIFFPAATGILAGAN. K(+) is bound by residues Pro-417, Ala-418, and Thr-420. The chloride site is built by Pro-417 and Ala-418. Positions 421 and 422 each coordinate chloride. Over 428-438 the chain is Cytoplasmic; the sequence is ISGDLADPQMA. The helical transmembrane segment at 439–462 threads the bilayer; that stretch reads IPKGTLLAILITGLVYVGVAISAG. Topologically, residues 463–523 are extracellular; that stretch reads ACIVRDATGI…DFQVMSVVSG (61 aa). N-linked (GlcNAc...) asparagine glycosylation is found at Asn-475 and Asn-481. The cysteines at positions 496 and 507 are disulfide-linked. A helical membrane pass occupies residues 524–551; the sequence is FSPLISAGIFSATLSSALASLVSAPKVF. The Na(+) site is built by Ala-535, Ser-538, and Ser-539. Topologically, residues 552-576 are cytoplasmic; it reads QALCKDNIYPGIAIFGKGYGKNNEP. A run of 2 helical transmembrane segments spans residues 577–595 and 596–619; these read LRGYFLTFGIALAFILIAE and LNVIAPIISNFFLASYALINFSVF. 2 residues coordinate chloride: Phe-607 and Tyr-611. The Cytoplasmic portion of the chain corresponds to 620-636; that stretch reads HASLANSPGWRPSFKYY. A run of 2 helical transmembrane segments spans residues 637-656 and 657-672; these read NMWASLAGAILCCVVMFIIN and WWAALLTNVIVLSLYI. At 673-1136 the chain is on the cytoplasmic side; the sequence is YVSYKKPDVN…NHQSVLTFYS (464 aa). The segment at 689-702 is scissor helix; sequence ALTYHQALTHSLQL. The segment at 875-921 is disordered; it reads SKDSDGDSSKPSSKATSVQNSPAVQKDEDDDGKAHTQPLLKKDKKSP. Thr-1059 carries the post-translational modification Phosphothreonine.

Belongs to the SLC12A transporter family. Homodimer; adopts a domain-swap conformation at the scissor helices connecting the transmembrane domain and C-terminal domain. In terms of processing, phosphorylated at Thr-125, Thr-129 and Thr-134 by OXSR1/OSR1 and STK39/SPAK downstream of WNK kinases (WNK1, WNK2, WNK3 or WNK4), promoting its activity.

It is found in the basolateral cell membrane. The enzyme catalyses K(+)(out) + 2 chloride(out) + Na(+)(out) = K(+)(in) + 2 chloride(in) + Na(+)(in). Its activity is regulated as follows. Activated following phosphorylation by OXSR1/OSR1 and STK39/SPAK. Inhibited by bumetanide. Its function is as follows. Cation-chloride cotransporter which mediates the electroneutral transport of chloride, potassium and/or sodium ions across the membrane. Plays a vital role in the regulation of ionic balance and cell volume. Important for maintenance of endolymph volume in the otic vesicle, probably by regulating ion homeostasis. Also plays a role in normal development of the swim bladder. This chain is Solute carrier family 12 member 2, found in Danio rerio (Zebrafish).